The sequence spans 514 residues: 2-isopropylmalate synthase (514 aa).

Residues 5–267 (VIIFDTTLRD…ETNIKHEEIH (263 aa)) enclose the Pyruvate carboxyltransferase domain. Asp14, His202, His204, and Asn238 together coordinate Mn(2+). Residues 392 to 514 (KLNYLSVQSG…AEIKERIATV (123 aa)) are regulatory domain.

This sequence belongs to the alpha-IPM synthase/homocitrate synthase family. LeuA type 1 subfamily. As to quaternary structure, homodimer. Requires Mn(2+) as cofactor.

The protein resides in the cytoplasm. The enzyme catalyses 3-methyl-2-oxobutanoate + acetyl-CoA + H2O = (2S)-2-isopropylmalate + CoA + H(+). Its pathway is amino-acid biosynthesis; L-leucine biosynthesis; L-leucine from 3-methyl-2-oxobutanoate: step 1/4. In terms of biological role, catalyzes the condensation of the acetyl group of acetyl-CoA with 3-methyl-2-oxobutanoate (2-ketoisovalerate) to form 3-carboxy-3-hydroxy-4-methylpentanoate (2-isopropylmalate). This chain is 2-isopropylmalate synthase, found in Photobacterium profundum (strain SS9).